The primary structure comprises 146 residues: Hemoglobin subunit beta (146 aa).

The 145-residue stretch at 2–146 (HWTAEEKQLI…VAHALARKYH (145 aa)) folds into the Globin domain. 2 residues coordinate heme b: His-63 and His-92.

It belongs to the globin family. As to quaternary structure, heterotetramer of two alpha chains and two beta chains. As to expression, red blood cells.

In terms of biological role, involved in oxygen transport from the lung to the various peripheral tissues. This chain is Hemoglobin subunit beta (HBB), found in Aquila chrysaetos (Golden eagle).